Here is a 682-residue protein sequence, read N- to C-terminus: DNA-directed RNA polymerase subunit beta' (682 aa).

Residues cysteine 69, cysteine 71, cysteine 87, and cysteine 90 each contribute to the Zn(2+) site. 3 residues coordinate Mg(2+): aspartate 489, aspartate 491, and aspartate 493.

The protein belongs to the RNA polymerase beta' chain family. RpoC1 subfamily. In plastids the minimal PEP RNA polymerase catalytic core is composed of four subunits: alpha, beta, beta', and beta''. When a (nuclear-encoded) sigma factor is associated with the core the holoenzyme is formed, which can initiate transcription. It depends on Mg(2+) as a cofactor. Requires Zn(2+) as cofactor.

It is found in the plastid. Its subcellular location is the chloroplast. The enzyme catalyses RNA(n) + a ribonucleoside 5'-triphosphate = RNA(n+1) + diphosphate. Functionally, DNA-dependent RNA polymerase catalyzes the transcription of DNA into RNA using the four ribonucleoside triphosphates as substrates. This Brachypodium distachyon (Purple false brome) protein is DNA-directed RNA polymerase subunit beta'.